A 194-amino-acid chain; its full sequence is Type II methyltransferase M.MjaVI (194 aa).

This sequence belongs to the N(4)/N(6)-methyltransferase family. N(4) subfamily.

The catalysed reaction is a 2'-deoxycytidine in DNA + S-adenosyl-L-methionine = an N(4)-methyl-2'-deoxycytidine in DNA + S-adenosyl-L-homocysteine + H(+). A beta subtype methylase that recognizes the double-stranded sequence 5'-CCGG-3', methylates C-1 on both strands, and protects the DNA from cleavage by the MjaVI endonuclease. In Methanocaldococcus jannaschii (strain ATCC 43067 / DSM 2661 / JAL-1 / JCM 10045 / NBRC 100440) (Methanococcus jannaschii), this protein is Type II methyltransferase M.MjaVI (mjaVIM).